Here is a 3411-residue protein sequence, read N- to C-terminus: Genome polyprotein (3411 aa).

Topologically, residues 1–104 (MSGRKAQGKT…LSSRKRRSHD (104 aa)) are cytoplasmic. Positions 102 to 121 (SHDALAVQFLILGMLLMAGG) are cleaved as a propeptide — ER anchor for the capsid protein C, removed in mature form by serine protease NS3. A helical transmembrane segment spans residues 105 to 125 (ALAVQFLILGMLLMAGGVTLV). Over 126–244 (RKNRWLLLNV…GERQLQKIER (119 aa)) the chain is Extracellular. N134 and N150 each carry an N-linked (GlcNAc...) asparagine; by host glycan. The chain crosses the membrane as a helical span at residues 245 to 265 (WLVRNPFFAVTALTIAYLVGS). The Cytoplasmic portion of the chain corresponds to 266-270 (NMTQR). The helical transmembrane segment at 271-285 (VVIALLVLAVGPAYS) threads the bilayer. Topologically, residues 286 to 730 (AHCIGITDRD…TVFGSAFQGL (445 aa)) are extracellular. Cystine bridges form between C288-C315, C345-C401, C345-C406, C359-C390, C377-C401, C377-C406, C467-C568, and C585-C615. Residues 383-396 (DRGWGNGCGLFGKG) are fusion peptide. Residues 731–751 (FGGLSWITKVIMGAVLIWVGI) traverse the membrane as a helical segment. Residues 752–757 (NTRNMT) are Extracellular-facing. Residues 758 to 778 (MSMSMILVGVIMMFLSLGVGA) traverse the membrane as a helical segment. The Extracellular segment spans residues 779 to 1132 (DQGCAINFGK…LVRSWVTAGE (354 aa)). Disulfide bonds link C782/C793, C833/C921, C957/C1002, C1058/C1107, C1069/C1091, and C1090/C1094. N-linked (GlcNAc...) asparagine; by host glycans are attached at residues N908 and N986. A helical transmembrane segment spans residues 1133 to 1153 (IHAVPFGLVSMMIAMEVVLRK). At 1154–1201 (RQGPKQMLVGGVVLLGAMLVGQVTLLDLLKLTVAVGLHFHEMNNGGDA) the chain is on the cytoplasmic side. Residues 1202–1222 (MYMALIAAFSIRPGLLIGFGL) form a helical membrane-spanning segment. Topologically, residues 1223-1287 (RTLWSPRERL…ILPLMALLTP (65 aa)) are lumenal. The chain crosses the membrane as a helical span at residues 1288–1308 (VTMAEVRLAAMLFCTVVIIGV). The Cytoplasmic portion of the chain corresponds to 1309-1355 (LHQNSKDTSMQKTIPLVALTLTSYLGLTQPFLGLCAFLATRLFGRRS). A helical transmembrane segment spans residues 1356-1376 (IPVNEALAAAGLVGVLAGLAF). Residues 1377 to 1378 (QE) are Lumenal-facing. Residues 1379-1399 (MENFLGPIAVGGILMMLVSVA) traverse the membrane as a helical segment. Over 1400–1456 (GRVDGLELRKLGEVSWEEEAEISGSSARYDVALSEQGEFKLLSEEKVPWDQVVMTSL) the chain is Cytoplasmic. The tract at residues 1407-1446 (LRKLGEVSWEEEAEISGSSARYDVALSEQGEFKLLSEEKV) is interacts with and activates NS3 protease. Positions 1457–1477 (ALVGAAIHPFALLLVLAGWLF) form an intramembrane region, helical. Over 1478–2157 (HVKGARRSGD…RNALSMMPEA (680 aa)) the chain is Cytoplasmic. One can recognise a Peptidase S7 domain in the interval 1485-1665 (SGDVLWDIPT…EVKEEGKEEL (181 aa)). Catalysis depends on charge relay system; for serine protease NS3 activity residues H1537, D1561, and S1622. The region spanning 1669 to 1825 (PTMLKKGMTT…HSNGEIEDVQ (157 aa)) is the Helicase ATP-binding domain. The important for RNA-binding stretch occupies residues 1673–1676 (KKGM). 1682-1689 (FHPGAGKT) contributes to the ATP binding site. The short motif at 1773–1776 (DEAH) is the DEAH box element. Residues 1820–1997 (EIEDVQTDIP…VRGGMVAPLY (178 aa)) enclose the Helicase C-terminal domain. Position 1877 is an N6-acetyllysine; by host (K1877). Residues 1942–1961 (AAQRRGRIGRNPNRDGDSYY) form a disordered region. A helical membrane pass occupies residues 2158 to 2178 (MTIAMLFILAGLLTSGMVIFF). The Lumenal segment spans residues 2179–2186 (MSPKGISR). The helical intramembrane region spans 2187–2207 (MSMAMGTMAGCGYLMFLGGVK). Residues 2208–2209 (PT) lie on the Lumenal side of the membrane. The helical transmembrane segment at 2210–2230 (HISYIMLIFFVLMVVVIPEPG) threads the bilayer. At 2231 to 2241 (QQRSIQDNQVA) the chain is on the cytoplasmic side. The chain crosses the membrane as a helical span at residues 2242 to 2262 (YLIIGILTLVSVVAANELGML). At 2263–2293 (EKTKEDLFGKKDLIPSSASPWSWPDLDLKPG) the chain is on the lumenal side. An intramembrane region (helical) is located at residues 2294–2314 (AAWTVYVGIVTMLSPMLHHWI). Residues 2315–2360 (KVEYGNLSLSGIAQSASVLSFMDKGIPFMKMNISVIILLVSGWNSI) lie on the Lumenal side of the membrane. The chain crosses the membrane as a helical span at residues 2361-2380 (TVMPLLCGIGCAMLHWSLIL). Over 2381–2421 (PGIKAQQSKLAQRRVFHGVAKNPVVDGNPTVDIEEAPEMPA) the chain is Cytoplasmic. Residues 2422-2442 (LYEKKLALYLLLALSLASVAM) traverse the membrane as a helical segment. Over 2443 to 2445 (CRT) the chain is Lumenal. A helical transmembrane segment spans residues 2446 to 2466 (PFSLAEGIVLASAALGPLIEG). The Cytoplasmic segment spans residues 2467–3411 (NTSLLWNGPM…DADLQPGELI (945 aa)). An mRNA cap 0-1 NS5-type MT domain is found at 2507-2771 (GRANGKTLGE…DVILPIGTRS (265 aa)). Position 2562 (S2562) interacts with S-adenosyl-L-methionine. S2562 is modified (phosphoserine). Residue K2567 is the For 2'-O-MTase activity of the active site. S-adenosyl-L-methionine-binding residues include G2592, W2593, T2610, L2611, D2637, and I2638. D2652 acts as the For 2'-O-MTase activity in catalysis. I2653 lines the S-adenosyl-L-methionine pocket. Active-site for 2'-O-MTase activity residues include K2688 and E2724. Position 2726 (Y2726) interacts with S-adenosyl-L-methionine. Positions 2878-2911 (RKIMKVVNRWLFRHLAREKNPRLCTKEEFIAKVR) match the Nuclear localization signal motif. Positions 2945, 2949, 2954, and 2957 each coordinate Zn(2+). Residues 3035–3187 (GGFYADDTAG…RPIDDRFGLA (153 aa)) form the RdRp catalytic domain. Zn(2+)-binding residues include H3222, C3238, and C3357.

This sequence in the N-terminal section; belongs to the class I-like SAM-binding methyltransferase superfamily. mRNA cap 0-1 NS5-type methyltransferase family. As to quaternary structure, homodimer. Interacts (via N-terminus) with host EXOC1 (via C-terminus); this interaction results in EXOC1 degradation through the proteasome degradation pathway. Forms heterodimers with envelope protein E in the endoplasmic reticulum and Golgi. In terms of assembly, homodimer; in the endoplasmic reticulum and Golgi. Interacts with protein prM. Interacts with non-structural protein 1. As to quaternary structure, homodimer; Homohexamer when secreted. Interacts with envelope protein E. Interacts (via N-terminus) with serine protease NS3. In terms of assembly, forms a heterodimer with serine protease NS3. May form homooligomers. As to quaternary structure, forms a heterodimer with NS2B. Interacts with non-structural protein 2A (via N-terminus). Interacts with NS4B. Interacts with unphosphorylated RNA-directed RNA polymerase NS5; this interaction stimulates RNA-directed RNA polymerase NS5 guanylyltransferase activity. NS3 interacts with host PDCD6IP; this interaction contributes to virion release. Interacts with serine protease NS3. In terms of assembly, homodimer. Interacts with host STAT2; this interaction prevents the establishment of cellular antiviral state. Interacts with serine protease NS3. Interacts with host TRIM23; this interaction leads to NS5 ubiquitination. Post-translationally, specific enzymatic cleavages in vivo yield mature proteins. The nascent capsid protein C contains a C-terminal hydrophobic domain that act as a signal sequence for translocation of prM into the lumen of the ER. Mature capsid protein C is cleaved at a site upstream of this hydrophobic domain by NS3. prM is cleaved in post-Golgi vesicles by a host furin, releasing the mature small envelope protein M, and peptide pr. Non-structural protein 2A-alpha, a C-terminally truncated form of non-structural protein 2A, results from partial cleavage by NS3. Specific enzymatic cleavages in vivo yield mature proteins peptide 2K acts as a signal sequence and is removed from the N-terminus of NS4B by the host signal peptidase in the ER lumen. Signal cleavage at the 2K-4B site requires a prior NS3 protease-mediated cleavage at the 4A-2K site. In terms of processing, cleaved in post-Golgi vesicles by a host furin, releasing the mature small envelope protein M, and peptide pr. This cleavage is incomplete as up to 30% of viral particles still carry uncleaved prM. N-glycosylated. Post-translationally, N-glycosylated. The excreted form is glycosylated and this is required for efficient secretion of the protein from infected cells. In terms of processing, polyubiquitinated; ubiquitination is probably mediated by host TRIM23 and is prerequisite for NS5-STAT2 interaction. NS5 is not ISGylated or sumoylated. Acetylated by host KAT5. Acetylation modulates NS3 RNA-binding and unwinding activities and plays an important positive role for viral replication. Post-translationally, phosphorylated on serines residues. This phosphorylation may trigger NS5 nuclear localization.

Its subcellular location is the virion. It localises to the host nucleus. It is found in the host cytoplasm. The protein localises to the host perinuclear region. The protein resides in the secreted. Its subcellular location is the virion membrane. It localises to the host endoplasmic reticulum membrane. The enzyme catalyses Selective hydrolysis of -Xaa-Xaa-|-Yaa- bonds in which each of the Xaa can be either Arg or Lys and Yaa can be either Ser or Ala.. The catalysed reaction is RNA(n) + a ribonucleoside 5'-triphosphate = RNA(n+1) + diphosphate. It carries out the reaction a ribonucleoside 5'-triphosphate + H2O = a ribonucleoside 5'-diphosphate + phosphate + H(+). It catalyses the reaction ATP + H2O = ADP + phosphate + H(+). The enzyme catalyses a 5'-end (5'-triphosphoguanosine)-ribonucleoside in mRNA + S-adenosyl-L-methionine = a 5'-end (N(7)-methyl 5'-triphosphoguanosine)-ribonucleoside in mRNA + S-adenosyl-L-homocysteine. The catalysed reaction is a 5'-end (N(7)-methyl 5'-triphosphoguanosine)-ribonucleoside in mRNA + S-adenosyl-L-methionine = a 5'-end (N(7)-methyl 5'-triphosphoguanosine)-(2'-O-methyl-ribonucleoside) in mRNA + S-adenosyl-L-homocysteine + H(+). In terms of biological role, plays a role in virus budding by binding to the cell membrane and gathering the viral RNA into a nucleocapsid that forms the core of a mature virus particle. During virus entry, may induce genome penetration into the host cytoplasm after hemifusion induced by the surface proteins. Can migrate to the cell nucleus where it modulates host functions. Inhibits RNA silencing by interfering with host Dicer. Its function is as follows. Prevents premature fusion activity of envelope proteins in trans-Golgi by binding to envelope protein E at pH6.0. After virion release in extracellular space, gets dissociated from E dimers. Functionally, acts as a chaperone for envelope protein E during intracellular virion assembly by masking and inactivating envelope protein E fusion peptide. prM is the only viral peptide matured by host furin in the trans-Golgi network probably to avoid catastrophic activation of the viral fusion activity in acidic Golgi compartment prior to virion release. prM-E cleavage is inefficient, and many virions are only partially matured. These uncleaved prM would play a role in immune evasion. In terms of biological role, may play a role in virus budding. Exerts cytotoxic effects by activating a mitochondrial apoptotic pathway through M ectodomain. May display a viroporin activity. Binds to host cell surface receptor and mediates fusion between viral and cellular membranes. Envelope protein is synthesized in the endoplasmic reticulum in the form of heterodimer with protein prM. They play a role in virion budding in the ER, and the newly formed immature particle is covered with 60 spikes composed of heterodimer between precursor prM and envelope protein E. The virion is transported to the Golgi apparatus where the low pH causes dissociation of PrM-E heterodimers and formation of E homodimers. prM-E cleavage is inefficient, and many virions are only partially matured. These uncleaved prM would play a role in immune evasion. Its function is as follows. Involved in immune evasion, pathogenesis and viral replication. Once cleaved off the polyprotein, is targeted to three destinations: the viral replication cycle, the plasma membrane and the extracellular compartment. Essential for viral replication. Required for formation of the replication complex and recruitment of other non-structural proteins to the ER-derived membrane structures. Excreted as a hexameric lipoparticle that plays a role against host immune response. Antagonizing the complement function. Binds to the host macrophages and dendritic cells. Inhibits signal transduction originating from Toll-like receptor 3 (TLR3). Functionally, component of the viral RNA replication complex that functions in virion assembly and antagonizes the host immune response. In terms of biological role, required cofactor for the serine protease function of NS3. May have membrane-destabilizing activity and form viroporins. Displays three enzymatic activities: serine protease, NTPase and RNA helicase. NS3 serine protease, in association with NS2B, performs its autocleavage and cleaves the polyprotein at dibasic sites in the cytoplasm: C-prM, NS2A-NS2B, NS2B-NS3, NS3-NS4A, NS4A-2K and NS4B-NS5. NS3 RNA helicase binds RNA and unwinds dsRNA in the 3' to 5' direction. Also plays a role in virus assembly. Its function is as follows. Regulates the ATPase activity of the NS3 helicase activity. NS4A allows NS3 helicase to conserve energy during unwinding. Functionally, functions as a signal peptide for NS4B and is required for the interferon antagonism activity of the latter. In terms of biological role, induces the formation of ER-derived membrane vesicles where the viral replication takes place. Inhibits interferon (IFN)-induced host STAT1 phosphorylation and nuclear translocation, thereby preventing the establishment of cellular antiviral state by blocking the IFN-alpha/beta pathway. Replicates the viral (+) and (-) RNA genome, and performs the capping of genomes in the cytoplasm. NS5 methylates viral RNA cap at guanine N-7 and ribose 2'-O positions. Besides its role in RNA genome replication, also prevents the establishment of cellular antiviral state by blocking the interferon-alpha/beta (IFN-alpha/beta) signaling pathway. IFN-I induces binding of NS5 to host IFN-activated transcription factor STAT2, preventing its transcriptional activity. Host TRIM23 is the E3 ligase that interacts with and polyubiquitinates NS5 to promote its binding to STAT2 and trigger IFN-I signaling inhibition. The protein is Genome polyprotein of Yellow fever virus (isolate Ivory Coast/1999) (YFV).